Reading from the N-terminus, the 349-residue chain is 1-acylglycerol-3-phosphate O-acyltransferase ABHD5 (349 aa).

Residue A2 is modified to N-acetylalanine. Residues 77 to 185 (PLVLLHGFGG…VEPWGFPERP (109 aa)) form the AB hydrolase-1 domain. The short motif at 327 to 332 (HYVYAD) is the HXXXXD motif element.

This sequence belongs to the peptidase S33 family. ABHD4/ABHD5 subfamily. Interacts with ADRP, PLIN and PNPLA2. Interacts with PLIN5; promotes interaction with PNPLA2.

The protein localises to the cytoplasm. Its subcellular location is the lipid droplet. The catalysed reaction is a 1-acyl-sn-glycero-3-phosphate + an acyl-CoA = a 1,2-diacyl-sn-glycero-3-phosphate + CoA. It catalyses the reaction 1-(9Z-octadecenoyl)-sn-glycero-3-phosphate + (9Z)-octadecenoyl-CoA = 1,2-di-(9Z-octadecenoyl)-sn-glycero-3-phosphate + CoA. The enzyme catalyses 1-(9Z-octadecenoyl)-sn-glycero-3-phosphate + hexadecanoyl-CoA = 1-(9Z)-octadecenoyl-2-hexadecanoyl-sn-glycero-3-phosphate + CoA. It carries out the reaction 1-(9Z-octadecenoyl)-sn-glycero-3-phosphate + octadecanoyl-CoA = 1-(9Z-octadecenoyl)-2-octadecanoyl-sn-glycero-3-phosphate + CoA. The catalysed reaction is 1-(9Z-octadecenoyl)-sn-glycero-3-phosphate + (5Z,8Z,11Z,14Z)-eicosatetraenoyl-CoA = 1-(9Z)-octadecenoyl-2-(5Z,8Z,11Z,14Z)-eicosatetraenoyl-sn-glycero-3-phosphate + CoA. It catalyses the reaction eicosanoyl-CoA + 1-(9Z-octadecenoyl)-sn-glycero-3-phosphate = 1-(9Z)-octadecenoyl-2-eicosanoyl-sn-glycero-3-phosphate + CoA. The enzyme catalyses 1-hexadecanoyl-sn-glycero-3-phosphate + (9Z)-octadecenoyl-CoA = 1-hexadecanoyl-2-(9Z-octadecenoyl)-sn-glycero-3-phosphate + CoA. It carries out the reaction 1-octadecanoyl-sn-glycero-3-phosphate + (9Z)-octadecenoyl-CoA = 1-octadecanoyl-2-(9Z-octadecenoyl)-sn-glycero-3-phosphate + CoA. The catalysed reaction is 1-(5Z,8Z,11Z,14Z-eicosatetraenoyl)-sn-glycero-3-phosphate + (9Z)-octadecenoyl-CoA = 1-(5Z,8Z,11Z,14Z)-eicosatetraenoyl-2-(9Z)-octadecenoyl-sn-glycero-3-phosphate + CoA. Acyltransferase activity is inhibited by detergents such as Triton X-100 and 3-[(3-cholamidopropyl)dimethylammonio]-1-propanesulfonate (CHAPS). Acyltransferase activity is inhibited by the presence of magnesium and calcium. Its function is as follows. Coenzyme A-dependent lysophosphatidic acid acyltransferase that catalyzes the transfer of an acyl group on a lysophosphatidic acid. Functions preferentially with 1-oleoyl-lysophosphatidic acid followed by 1-palmitoyl-lysophosphatidic acid, 1-stearoyl-lysophosphatidic acid and 1-arachidonoyl-lysophosphatidic acid as lipid acceptor. Functions preferentially with arachidonoyl-CoA followed by oleoyl-CoA as acyl group donors. Functions in phosphatidic acid biosynthesis. May regulate the cellular storage of triacylglycerol through activation of the phospholipase PNPLA2. Involved in keratinocyte differentiation. Regulates lipid droplet fusion. The chain is 1-acylglycerol-3-phosphate O-acyltransferase ABHD5 from Sus scrofa (Pig).